We begin with the raw amino-acid sequence, 217 residues long: Thiopurine S-methyltransferase (217 aa).

Residues Trp-10, Leu-45, Glu-66, and Arg-123 each contribute to the S-adenosyl-L-methionine site.

It belongs to the class I-like SAM-binding methyltransferase superfamily. TPMT family.

Its subcellular location is the cytoplasm. It carries out the reaction S-adenosyl-L-methionine + a thiopurine = S-adenosyl-L-homocysteine + a thiopurine S-methylether.. This Pseudomonas fluorescens (strain Pf0-1) protein is Thiopurine S-methyltransferase.